Consider the following 793-residue polypeptide: Probable alpha-fucosidase A (793 aa).

The N-terminal stretch at 1–20 (MLISGSSAALCALALPFAAA) is a signal peptide. Asn-30, Asn-83, Asn-100, Asn-104, Asn-123, Asn-179, Asn-199, Asn-234, Asn-323, Asn-597, Asn-622, Asn-660, and Asn-757 each carry an N-linked (GlcNAc...) asparagine glycan.

This sequence belongs to the glycosyl hydrolase 95 family.

Its subcellular location is the secreted. It carries out the reaction an alpha-L-fucoside + H2O = L-fucose + an alcohol. Alpha-fucosidase involved in degradation of fucosylated xyloglucans. Hydrolyzes alpha-1,2-linked fucose. In Aspergillus niger (strain ATCC MYA-4892 / CBS 513.88 / FGSC A1513), this protein is Probable alpha-fucosidase A (afcA).